The sequence spans 299 residues: GTPase Era (299 aa).

The Era-type G domain occupies 8–176 (RCGYVAIVGR…EKLVGERLPE (169 aa)). The G1 stretch occupies residues 16–23 (GRPNVGKS). 16–23 (GRPNVGKS) serves as a coordination point for GTP. The G2 stretch occupies residues 42–46 (QTTRH). Positions 63-66 (DTPG) are G3. Residues 63-67 (DTPGL) and 125-128 (NKAD) contribute to the GTP site. The G4 stretch occupies residues 125–128 (NKAD). Residues 155–157 (ISA) form a G5 region. The 85-residue stretch at 199–283 (IREKIMRQLG…MLNLWVKVKG (85 aa)) folds into the KH type-2 domain.

It belongs to the TRAFAC class TrmE-Era-EngA-EngB-Septin-like GTPase superfamily. Era GTPase family. Monomer.

The protein localises to the cytoplasm. Its subcellular location is the cell inner membrane. An essential GTPase that binds both GDP and GTP, with rapid nucleotide exchange. Plays a role in 16S rRNA processing and 30S ribosomal subunit biogenesis and possibly also in cell cycle regulation and energy metabolism. This Ectopseudomonas mendocina (strain ymp) (Pseudomonas mendocina) protein is GTPase Era.